The chain runs to 270 residues: Hairy and enhancer of split-related protein helt (270 aa).

The interval 1-24 (MNARALYKRPPPVSSSQSEASGKR) is disordered. The region spanning 59 to 114 (KTPVSHKVIEKRRRDRINRCLNELGKTVPMALAKQNSGKLEKAEILEMTVQYLRAL) is the bHLH domain. Residues 136-171 (FHYGYHECMKNLVHYLTTVERMETKDTKYARILAFL) enclose the Orange domain.

Belongs to the HEY family.

It is found in the nucleus. In terms of biological role, transcriptional repressor which binds preferentially to the canonical E box sequence 5'-CACGCG-3'. The sequence is that of Hairy and enhancer of split-related protein helt (helt) from Danio rerio (Zebrafish).